Here is a 938-residue protein sequence, read N- to C-terminus: Protein O-mannosyl-transferase Tmtc2 (938 aa).

Residue Met-1 is a topological domain, cytoplasmic. The chain crosses the membrane as a helical span at residues 2-22; sequence PSLEPWLWGDSCSWLGMLAML. The Extracellular segment spans residues 23–34; it reads RLRLHKSNMDFT. A helical transmembrane segment spans residues 35 to 55; sequence CLFCCSLAFVLYLNTLGAGFV. Residues 56 to 108 lie on the Cytoplasmic side of the membrane; sequence YDDRRAILANADVSGGTPWQRSFSNDFWGTPLTDSGSHGSWRPLCVLSFRLNY. The helical transmembrane segment at 109–129 threads the bilayer; it reads LIGGGFAPWGFHLVNNLLHCV. At 130–139 the chain is on the extracellular side; the sequence is ATALVVRVAR. A helical transmembrane segment spans residues 140 to 160; it reads TLLASVWAVLAAGALFAAHPI. Residues 161–164 are Cytoplasmic-facing; that stretch reads HTEA. A helical transmembrane segment spans residues 165 to 185; it reads VAGVVGRADLAACVCYLLTYL. At 186–208 the chain is on the extracellular side; sequence SYLRHMRWRESGDPRQWLALGAT. A helical transmembrane segment spans residues 209 to 229; sequence LILAAAGLLCKETAITALLVC. The Cytoplasmic portion of the chain corresponds to 230–249; that stretch reads ALFDVMRGLSGQVDKQRLRS. The helical transmembrane segment at 250-270 threads the bilayer; it reads VCIVLGALFCMAYCRLVIVPG. Topologically, residues 271 to 291 are extracellular; the sequence is PQTAFSSADNPIARTPSAWTR. The helical transmembrane segment at 292 to 312 threads the bilayer; the sequence is LLTFLYLPVFNLRLLLQPNVL. Residues 313-510 lie on the Cytoplasmic side of the membrane; it reads SFDWGMDALP…HACVLIMSLS (198 aa). The tract at residues 450–480 is disordered; sequence RSSSSCSNSTNSSSSSSSSSSSSSSSSSSLS. The chain crosses the membrane as a helical span at residues 511–531; the sequence is FLALPFLPASNLLFYVGFVVA. The Extracellular portion of the chain corresponds to 532–533; it reads ER. A helical transmembrane segment spans residues 534 to 554; the sequence is LLYLPSVGFCLLVGYGVSKLM. Residues 555–562 lie on the Cytoplasmic side of the membrane; sequence SCNQRTRN. The chain crosses the membrane as a helical span at residues 563–580; sequence ILLLSFSLLLAAMSLRTL. Topologically, residues 581 to 938 are extracellular; the sequence is RRNADWRDEE…NLAKLGVTNV (358 aa). TPR repeat units lie at residues 602-635, 636-669, 670-703, 715-748, 753-786, 788-821, 822-855, 856-889, and 890-923; these read PKALGNLGSVLSSQGRYEEAKQVLQEAIRFRPNM, ADVHFNLGILHQNQQVYPAAVECFQRAIKFRPNL, AVAYLNLGISFIALGKRQQAIEILQAGSNLDGAA, SSAYLQLGALYVEQGKLQRALAIYREALSSLPGL, EILYQRIGDVLGRLQQWDEAERHHRAALELQPNQ, AAHLSYGITLARNSSRASEAEMWFKRALKLAPEQ, ASVYHHYAEFLSLQSRHHESAIYHRRAAELAPND, YTLVVAAATAMRLLDRKVDAEMWYRKAVALRPGD, and AHAHTNLGAILHLLGRTNHAAASYKAALRLQPGD. The N-linked (GlcNAc...) asparagine glycan is linked to Asn-800.

This sequence belongs to the TMTC family.

The protein resides in the membrane. The protein localises to the endoplasmic reticulum. It carries out the reaction a di-trans,poly-cis-dolichyl beta-D-mannosyl phosphate + L-seryl-[protein] = 3-O-(alpha-D-mannosyl)-L-seryl-[protein] + a di-trans,poly-cis-dolichyl phosphate + H(+). The catalysed reaction is a di-trans,poly-cis-dolichyl beta-D-mannosyl phosphate + L-threonyl-[protein] = 3-O-(alpha-D-mannosyl)-L-threonyl-[protein] + a di-trans,poly-cis-dolichyl phosphate + H(+). Its pathway is protein modification; protein glycosylation. In terms of biological role, transfers mannosyl residues to the hydroxyl group of serine or threonine residues. This is Protein O-mannosyl-transferase Tmtc2 from Drosophila melanogaster (Fruit fly).